The chain runs to 118 residues: Small ribosomal subunit protein uS19c (118 aa).

Positions 92 to 118 are disordered; sequence KKSSKKVTKNKKSIKKNIKTTSKKFKK.

Belongs to the universal ribosomal protein uS19 family.

The protein localises to the plastid. In terms of biological role, protein S19 forms a complex with S13 that binds strongly to the 16S ribosomal RNA. This is Small ribosomal subunit protein uS19c (rps19) from Euglena longa (Euglenophycean alga).